We begin with the raw amino-acid sequence, 179 residues long: uncharacterized protein (179 aa).

The interval 160-179 (QPIEPNGTQPATETKTPVGV) is disordered. Polar residues predominate over residues 165 to 179 (NGTQPATETKTPVGV).

The protein belongs to the Dps family.

This is an uncharacterized protein from Anabaena variabilis.